The primary structure comprises 134 residues: Small ribosomal subunit protein uS12 (134 aa).

3-methylthioaspartic acid is present on D89. The segment at 103-134 (DTAGVKDRKQGRSKYGAKRPKPGEAAATGKKK) is disordered. Residues 113 to 122 (GRSKYGAKRP) show a composition bias toward basic residues.

Belongs to the universal ribosomal protein uS12 family. Part of the 30S ribosomal subunit. Contacts proteins S8 and S17. May interact with IF1 in the 30S initiation complex.

Functionally, with S4 and S5 plays an important role in translational accuracy. Its function is as follows. Interacts with and stabilizes bases of the 16S rRNA that are involved in tRNA selection in the A site and with the mRNA backbone. Located at the interface of the 30S and 50S subunits, it traverses the body of the 30S subunit contacting proteins on the other side and probably holding the rRNA structure together. The combined cluster of proteins S8, S12 and S17 appears to hold together the shoulder and platform of the 30S subunit. This Thermosynechococcus vestitus (strain NIES-2133 / IAM M-273 / BP-1) protein is Small ribosomal subunit protein uS12.